A 332-amino-acid chain; its full sequence is 2,3-bisphosphoglycerate-dependent phosphoglycerate mutase 2 (332 aa).

The transit peptide at 1–48 (MATSTTMSHQAIGSVVSQRPFKASQFLKEPLNNVPMKFRQKRFKIEAT) directs the protein to the chloroplast. Substrate-binding positions include 85–92 (RHGESLWN), 98–99 (TG), R135, 189–192 (ERMY), K200, 216–217 (RR), and 260–261 (GN). The active-site Tele-phosphohistidine intermediate is H86. Residue E189 is the Proton donor/acceptor of the active site.

Belongs to the phosphoglycerate mutase family. BPG-dependent PGAM subfamily.

The protein resides in the plastid. The protein localises to the chloroplast. It catalyses the reaction (2R)-2-phosphoglycerate = (2R)-3-phosphoglycerate. The protein operates within carbohydrate degradation; glycolysis; pyruvate from D-glyceraldehyde 3-phosphate: step 3/5. In terms of biological role, catalyzes the interconversion of 2-phosphoglycerate and 3-phosphoglycerate. The chain is 2,3-bisphosphoglycerate-dependent phosphoglycerate mutase 2 from Arabidopsis thaliana (Mouse-ear cress).